A 610-amino-acid chain; its full sequence is UvrABC system protein C (610 aa).

Residues serine 16–valine 94 enclose the GIY-YIG domain. In terms of domain architecture, UVR spans aspartate 204–valine 239.

Belongs to the UvrC family. As to quaternary structure, interacts with UvrB in an incision complex.

It localises to the cytoplasm. Functionally, the UvrABC repair system catalyzes the recognition and processing of DNA lesions. UvrC both incises the 5' and 3' sides of the lesion. The N-terminal half is responsible for the 3' incision and the C-terminal half is responsible for the 5' incision. The polypeptide is UvrABC system protein C (Salmonella paratyphi B (strain ATCC BAA-1250 / SPB7)).